Reading from the N-terminus, the 339-residue chain is Terpene synthase 7 (339 aa).

The DDxx(x)D/E motif motif lies at 79–84; the sequence is DDFLES. An NDxxSxxxD/E motif motif is present at residues 219-227; the sequence is NDCASYAKE.

The protein belongs to the terpene synthase family.

It carries out the reaction (2E,6E)-farnesyl diphosphate = (-)-beta-barbatene + diphosphate. In terms of biological role, terpene synthase that converts its substrate farnesyl diphosphate (FPP) into the sesquiterpene beta-barbatene. The protein is Terpene synthase 7 of Dictyostelium discoideum (Social amoeba).